The sequence spans 185 residues: Ribosome-recycling factor (185 aa).

It belongs to the RRF family.

It is found in the cytoplasm. In terms of biological role, responsible for the release of ribosomes from messenger RNA at the termination of protein biosynthesis. May increase the efficiency of translation by recycling ribosomes from one round of translation to another. This Corynebacterium aurimucosum (strain ATCC 700975 / DSM 44827 / CIP 107346 / CN-1) (Corynebacterium nigricans) protein is Ribosome-recycling factor.